Reading from the N-terminus, the 278-residue chain is Phosphatidylglycerol--prolipoprotein diacylglyceryl transferase (278 aa).

Helical transmembrane passes span 18 to 38 (IQVH…TILA), 55 to 75 (LILW…VIFE), 90 to 110 (WDGG…VYLF), and 115 to 135 (WIPV…AQGI). A 1,2-diacyl-sn-glycero-3-phospho-(1'-sn-glycerol) is bound at residue Arg137. 3 helical membrane passes run 177–197 (QPTF…LMSL), 207–227 (GEVF…VEGM), and 237–257 (IRVS…ILVF).

It belongs to the Lgt family.

The protein localises to the cell membrane. It carries out the reaction L-cysteinyl-[prolipoprotein] + a 1,2-diacyl-sn-glycero-3-phospho-(1'-sn-glycerol) = an S-1,2-diacyl-sn-glyceryl-L-cysteinyl-[prolipoprotein] + sn-glycerol 1-phosphate + H(+). Its pathway is protein modification; lipoprotein biosynthesis (diacylglyceryl transfer). Functionally, catalyzes the transfer of the diacylglyceryl group from phosphatidylglycerol to the sulfhydryl group of the N-terminal cysteine of a prolipoprotein, the first step in the formation of mature lipoproteins. The polypeptide is Phosphatidylglycerol--prolipoprotein diacylglyceryl transferase (Pediococcus pentosaceus (strain ATCC 25745 / CCUG 21536 / LMG 10740 / 183-1w)).